A 174-amino-acid polypeptide reads, in one-letter code: ATP synthase subunit delta (174 aa).

Belongs to the ATPase delta chain family. As to quaternary structure, F-type ATPases have 2 components, F(1) - the catalytic core - and F(0) - the membrane proton channel. F(1) has five subunits: alpha(3), beta(3), gamma(1), delta(1), epsilon(1). F(0) has three main subunits: a(1), b(2) and c(10-14). The alpha and beta chains form an alternating ring which encloses part of the gamma chain. F(1) is attached to F(0) by a central stalk formed by the gamma and epsilon chains, while a peripheral stalk is formed by the delta and b chains.

It localises to the cell inner membrane. In terms of biological role, f(1)F(0) ATP synthase produces ATP from ADP in the presence of a proton or sodium gradient. F-type ATPases consist of two structural domains, F(1) containing the extramembraneous catalytic core and F(0) containing the membrane proton channel, linked together by a central stalk and a peripheral stalk. During catalysis, ATP synthesis in the catalytic domain of F(1) is coupled via a rotary mechanism of the central stalk subunits to proton translocation. This protein is part of the stalk that links CF(0) to CF(1). It either transmits conformational changes from CF(0) to CF(1) or is implicated in proton conduction. This is ATP synthase subunit delta from Helicobacter hepaticus (strain ATCC 51449 / 3B1).